The sequence spans 184 residues: Large ribosomal subunit protein uL6 (184 aa).

Belongs to the universal ribosomal protein uL6 family. In terms of assembly, part of the 50S ribosomal subunit.

Its function is as follows. This protein binds to the 23S rRNA, and is important in its secondary structure. It is located near the subunit interface in the base of the L7/L12 stalk, and near the tRNA binding site of the peptidyltransferase center. This Onion yellows phytoplasma (strain OY-M) protein is Large ribosomal subunit protein uL6.